The sequence spans 400 residues: PHD finger protein 24 (400 aa).

The N-myristoyl glycine moiety is linked to residue Gly-2. The segment covering 28–38 (LRDRPSIRRTG) has biased composition (basic and acidic residues). A disordered region spans residues 28–99 (LRDRPSIRRT…PEEFDRTSRF (72 aa)). Omega-N-methylarginine is present on Arg-36. Residue Ser-43 is modified to Phosphoserine. At Thr-47 the chain carries Phosphothreonine. Residue Ser-51 is modified to Phosphoserine. The segment covering 78–97 (AWERLRDGRGVEPEEFDRTS) has biased composition (basic and acidic residues). A PHD-type zinc finger spans residues 129–190 (NDEMCDVCEV…TGWSCHYCDN (62 aa)).

The chain is PHD finger protein 24 from Homo sapiens (Human).